The primary structure comprises 297 residues: Calponin-1 (297 aa).

Residues 28–131 (HQREQELREW…STLLALASMA (104 aa)) enclose the Calponin-homology (CH) domain. Calponin-like repeat units follow at residues 164 to 189 (IGLQ…RHLY), 204 to 229 (ISLQ…RQIF), and 243 to 268 (VSLQ…RQVY). At threonine 170 the chain carries Phosphothreonine; by ROCK2. The residue at position 175 (serine 175) is a Phosphoserine; by ROCK2. Threonine 180 and threonine 184 each carry phosphothreonine; by ROCK2. Residue threonine 259 is modified to Phosphothreonine; by ROCK2.

It belongs to the calponin family. As to quaternary structure, part of cGMP kinase signaling complex at least composed of ACTA2/alpha-actin, CNN1/calponin H1, PLN/phospholamban, PRKG1 and ITPR1. As to expression, smooth muscle, and tissues containing significant amounts of smooth muscle.

Its function is as follows. Thin filament-associated protein that is implicated in the regulation and modulation of smooth muscle contraction. It is capable of binding to actin, calmodulin and tropomyosin. The interaction of calponin with actin inhibits the actomyosin Mg-ATPase activity. The protein is Calponin-1 (CNN1) of Homo sapiens (Human).